Here is an 89-residue protein sequence, read N- to C-terminus: MAHKKGVGSSKNGRESQSKRLGVKIFGGEACKAGNIIVRQRGTEFHPGENIGMGKDHTLFALVDGTVNFKVGREDRRYVSIIPAEATEA.

Belongs to the bacterial ribosomal protein bL27 family.

This chain is Large ribosomal subunit protein bL27, found in Bacteroides fragilis (strain ATCC 25285 / DSM 2151 / CCUG 4856 / JCM 11019 / LMG 10263 / NCTC 9343 / Onslow / VPI 2553 / EN-2).